Consider the following 307-residue polypeptide: Putative oxidoreductase YceM (307 aa).

It belongs to the Gfo/Idh/MocA family.

This chain is Putative oxidoreductase YceM (yceM), found in Salmonella typhimurium (strain LT2 / SGSC1412 / ATCC 700720).